Consider the following 229-residue polypeptide: Artemin (229 aa).

The residue at position 1 (Ala-1) is an N-acetylalanine. The 149-residue stretch at 25–173 (HNFDPECEKA…DCLSNLHCIG (149 aa)) folds into the Ferritin-like diiron domain.

The protein belongs to the ferritin family.

This chain is Artemin, found in Artemia salina (Brine shrimp).